Consider the following 122-residue polypeptide: UPF0102 protein ECH_0093 (122 aa).

It belongs to the UPF0102 family.

This chain is UPF0102 protein ECH_0093, found in Ehrlichia chaffeensis (strain ATCC CRL-10679 / Arkansas).